The primary structure comprises 101 residues: DNA-binding protein HU (101 aa).

This sequence belongs to the bacterial histone-like protein family. As to quaternary structure, homodimer.

Functionally, histone-like DNA-binding protein which is capable of wrapping DNA to stabilize it, and thus to prevent its denaturation under extreme environmental conditions. This is DNA-binding protein HU (hup) from Rickettsia bellii (strain RML369-C).